Here is a 234-residue protein sequence, read N- to C-terminus: Glutathione S-transferase U11 (234 aa).

A GST N-terminal domain is found at glutamate 11–proline 90. Glutathione contacts are provided by residues serine 21 to proline 22, leucine 47 to serine 48, glutamine 61 to isoleucine 62, and glutamate 74 to serine 75. The GST C-terminal domain occupies aspartate 96–phenylalanine 228.

This sequence belongs to the GST superfamily. Tau family.

It localises to the cytoplasm. It is found in the cytosol. The enzyme catalyses RX + glutathione = an S-substituted glutathione + a halide anion + H(+). May be involved in the conjugation of reduced glutathione to a wide number of exogenous and endogenous hydrophobic electrophiles and have a detoxification role against certain herbicides. The chain is Glutathione S-transferase U11 (GSTU11) from Arabidopsis thaliana (Mouse-ear cress).